Consider the following 154-residue polypeptide: Protein X (154 aa).

The mitochondrial targeting sequence stretch occupies residues 68–117 (PCALRFTSARRMETTVNAHQVLPKVLHKRTLGLSAMSTTDLEAYFKDCLF).

Belongs to the orthohepadnavirus protein X family. May form homodimer. May interact with host CEBPA, CFLAR, CREB1, DDB1, E4F1, HBXIP, HSPD1/HSP60, NFKBIA, POLR2E and SMAD4. Interacts with host SMC5-SMC6 complex and induces its degradation. Interacts with host TRPC4AP; leading to prevent ubiquitination of TRPC4AP. Interacts with host PLSCR1; this interaction promotes ubiquitination and degradation of HBx and impairs HBx-mediated cell proliferation. A fraction may be phosphorylated in insect cells and HepG2 cells, a human hepatoblastoma cell line. Phosphorylated in vitro by host protein kinase C or mitogen-activated protein kinase. N-acetylated in insect cells.

The protein resides in the host cytoplasm. It is found in the host nucleus. The protein localises to the host mitochondrion. In terms of biological role, multifunctional protein that plays a role in silencing host antiviral defenses and promoting viral transcription. Does not seem to be essential for HBV infection. May be directly involved in development of cirrhosis and liver cancer (hepatocellular carcinoma). Most of cytosolic activities involve modulation of cytosolic calcium. The effect on apoptosis is controversial depending on the cell types in which the studies have been conducted. May induce apoptosis by localizing in mitochondria and causing loss of mitochondrial membrane potential. May also modulate apoptosis by binding host CFLAR, a key regulator of the death-inducing signaling complex (DISC). Promotes viral transcription by using the host E3 ubiquitin ligase DDB1 to target the SMC5-SMC6 complex to proteasomal degradation. This host complex would otherwise bind to viral episomal DNA, and prevents its transcription. Moderately stimulates transcription of many different viral and cellular transcription elements. Promoters and enhancers stimulated by HBx contain DNA binding sites for NF-kappa-B, AP-1, AP-2, c-EBP, ATF/CREB, or the calcium-activated factor NF-AT. This Hepatitis B virus genotype C subtype adr (isolate Japan/Nishioka/1983) (HBV-C) protein is Protein X.